The chain runs to 99 residues: Plastocyanin (99 aa).

The 99-residue stretch at Ile-1 to Asn-99 folds into the Plastocyanin-like domain. Cu cation-binding residues include His-37, Cys-84, His-87, and Met-92.

This sequence belongs to the plastocyanin family. Cu(2+) serves as cofactor.

Its subcellular location is the plastid. The protein localises to the chloroplast thylakoid membrane. In terms of biological role, participates in electron transfer between P700 and the cytochrome b6-f complex in photosystem I. In Solanum crispum (Chilean potato-tree), this protein is Plastocyanin (PETE).